The following is a 335-amino-acid chain: RVS161-like protein RVS162 (335 aa).

The 294-residue stretch at 17 to 310 (VMLKTGHIEQ…LDAQTRQDYI (294 aa)) folds into the BAR domain. Residues 30–56 (KEYEFQEKRYRTMEENSIKLQKNLRLY) are a coiled coil. The tract at residues 105 to 127 (HEEEGEEKEEEENDNTTTTTTTT) is disordered. Residues 107 to 118 (EEGEEKEEEEND) are compositionally biased toward acidic residues. A coiled-coil region spans residues 222–259 (TNIIELNHNQYEEKLKIYNQELTEVESKYVEINNQLLI).

The protein resides in the cytoplasm. The protein localises to the cytoskeleton. Its function is as follows. Component of a cytoskeletal structure that is required for membrane curvature. The protein is RVS161-like protein RVS162 of Candida albicans (strain SC5314 / ATCC MYA-2876) (Yeast).